The sequence spans 77 residues: Chassatide C2 (77 aa).

The first 24 residues, 1 to 24 (MAKFANYLMLFLLVASLVMLEAQS), serve as a signal peptide directing secretion. Positions 25–44 (SDTIKVPDLGKRLLMNRDPN) are cleaved as a propeptide — removed in mature form. A cross-link (cyclopeptide (Gly-Asn)) is located at residues 45–75 (GIPCAESCVWIPCTITALMGCSCKNNVCYNN). Disulfide bonds link cysteine 48–cysteine 65, cysteine 52–cysteine 67, and cysteine 57–cysteine 72. Methionine 63 is modified (methionine sulfoxide; in form chassatide chaC2A). Positions 76 to 77 (EL) are cleaved as a propeptide — removed in mature form.

The protein belongs to the cyclotide family. Bracelet subfamily. Post-translationally, this is a cyclic peptide. Expressed in fruit, pedicel and stem but not in leaf and root (at protein level).

In terms of biological role, chassatide C2: Probably participates in a plant defense mechanism. Has no activity against bacteria up to a concentration of 80 uM. Has cytotoxic but no hemolytic activity. Its function is as follows. Chassatide C2A: Probably participates in a plant defense mechanism. Has no activity against bacteria up to a concentration of 80 uM. Has no cytotoxic and no hemolytic activity. The sequence is that of Chassatide C2 from Chassalia chartacea (Chassalia curviflora).